Here is a 114-residue protein sequence, read N- to C-terminus: Cytochrome c2 (114 aa).

Position 1 is a pyrrolidone carboxylic acid (Q1). Heme c is bound by residues C13, C16, H17, and M93.

Belongs to the cytochrome c family. Binds 1 heme c group covalently per subunit.

In terms of biological role, cytochrome c2 is found mainly in purple, non-sulfur, photosynthetic bacteria where it functions as the electron donor to the oxidized bacteriochlorophyll in the photophosphorylation pathway. However, it may also have a role in the respiratory chain and is found in some non-photosynthetic bacteria. The polypeptide is Cytochrome c2 (cycA) (Rhodopseudomonas palustris).